The chain runs to 211 residues: Bcl-2 homologous antagonist/killer (211 aa).

The segment at 1 to 28 (MASGQGPGPPRQECGEPALPSASEEQVA) is disordered. N-acetylalanine is present on Ala2. The BH3 signature appears at 74–88 (VGRQLAIIGDDINRR). The BH1 signature appears at 117–136 (SLFESGINWGRVVALLGFGY). Asp160 and His164 together coordinate Zn(2+). The BH2 motif lies at 169-184 (RWIAQRGGWVAALNLG). The helical transmembrane segment at 188 to 205 (ILNVLVVLGVVLLGQFVV) threads the bilayer.

Belongs to the Bcl-2 family. In terms of assembly, homodimer. Formation of the homodimer is zinc-dependent. Forms heterodimers with BCL2 and BCL2L1 isoform Bcl-X(L). Forms heterooligomers with BAX. Interacts with BCL2A1. Interacts with RTL10/BOP. Interacts with VDAC1. Interacts with GIMAP3/IAN4 and GIMAP5/IAN5. (Microbial infection) Interacts with vaccinia virus protein F1. As to quaternary structure, (Microbial infection) Interacts with myxoma virus protein M11L. In terms of assembly, (Microbial infection) Interacts with Epstein-Barr virus protein BALF1. (Microbial infection) Interacts with adenovirus protein E1B 19K. Expressed in a wide variety of tissues, with highest levels in the heart and skeletal muscle.

The protein localises to the mitochondrion outer membrane. In terms of biological role, plays a role in the mitochondrial apoptotic process. Upon arrival of cell death signals, promotes mitochondrial outer membrane (MOM) permeabilization by oligomerizing to form pores within the MOM. This releases apoptogenic factors into the cytosol, including cytochrome c, promoting the activation of caspase 9 which in turn processes and activates the effector caspases. This Homo sapiens (Human) protein is Bcl-2 homologous antagonist/killer (BAK1).